The following is a 981-amino-acid chain: Ubiquitin carboxyl-terminal hydrolase 37 (981 aa).

The short motif at 32 to 34 (KEN) is the KEN box 1 element. 2 consecutive short sequence motifs (D-box) follow at residues 71 to 79 (RLMLTLQDN) and 96 to 105 (RLFLDAVHQN). Residues 111-308 (MKPSQGSGSF…SAKRSLGFLP (198 aa)) form a disordered region. Serine 114 is modified (phosphoserine). Residues 135-148 (RQLSYSDNQASSKR) show a composition bias toward polar residues. Residues 149–159 (GSLETKDDIPF) are compositionally biased toward basic and acidic residues. Residues 160–168 (RKVLGNPGR) carry the D-box 3 motif. The residue at position 170 (serine 170) is a Phosphoserine. A compositionally biased stretch (polar residues) spans 172–195 (KTATGSGITVTRTIPSLTSASTPL). Position 212 is a phosphoserine (serine 212). Positions 223–225 (KEN) match the KEN box 2 motif. The segment covering 245–259 (SREKQLSLKQSEENR) has biased composition (basic and acidic residues). The span at 266 to 300 (LQSSSFYGSRTGSKDYSSGSTNLDRTNVSGQTPSA) shows a compositional bias: polar residues. A USP domain is found at 343-953 (QGFSNLGNTC…SGYIFFYMHK (611 aa)). The active-site Nucleophile is cysteine 352. Position 630 is a phosphoserine; by CDK2 (serine 630). Phosphoserine occurs at positions 652 and 654. Disordered regions lie at residues 673–704 (GCEQ…GFDG) and 719–831 (KREA…EQKE). Composition is skewed to basic and acidic residues over residues 683–697 (KDSK…KSEL) and 719–734 (KREA…DDKP). The UIM 1 domain occupies 706 to 725 (SEEELLAAVLEMSKREASPT). Serine 772 carries the phosphoserine modification. Residues 776–788 (ITKDCDENKENKT) show a composition bias toward basic and acidic residues. Positions 784–786 (KEN) match the KEN box 3 motif. UIM domains follow at residues 808–827 (REEQ…QEAW) and 830–849 (KEDD…FNNS). Residues 813-824 (LQQALAQSLQEQ) show a composition bias toward low complexity. Histidine 908 (proton acceptor) is an active-site residue.

The protein belongs to the peptidase C19 family. As to quaternary structure, interacts with FZR1/CDH1. Interacts with CDT1. Polyubiquitinated via 'Lys-11'-linked ubiquitin by the APC(CDH1) complex during late mitosis, leading to its degradation. Able to mediate auto-deubiquitination. In terms of processing, phosphorylated at Ser-630 by CDK2 during G1/S phase but not during mitosis; phosphorylation at Ser-630 is required for deubiquitinase activity. Also polyubiquitinated during early G1 phase, without leading to degradation. Phosphorylated at Ser-114 by ATM following DNA damage, which in turn increases its deubiquitination activity towards BLM.

The protein resides in the nucleus. The protein localises to the chromosome. The enzyme catalyses Thiol-dependent hydrolysis of ester, thioester, amide, peptide and isopeptide bonds formed by the C-terminal Gly of ubiquitin (a 76-residue protein attached to proteins as an intracellular targeting signal).. In terms of biological role, deubiquitinase that plays a role in different processes including cell cycle regulation, DNA replication or DNA damage response. Antagonizes the anaphase-promoting complex (APC/C) during G1/S transition by mediating deubiquitination of cyclin-A (CCNA1 and CCNA2), thereby promoting S phase entry. Specifically mediates deubiquitination of 'Lys-11'-linked polyubiquitin chains, a specific ubiquitin-linkage type mediated by the APC/C complex. Phosphorylation at Ser-628 during G1/S phase maximizes the deubiquitinase activity, leading to prevent degradation of cyclin-A (CCNA1 and CCNA2). Plays an important role in the regulation of DNA replication by stabilizing the licensing factor CDT1. Also plays an essential role beyond S-phase entry to promote the efficiency and fidelity of replication by deubiquitinating checkpoint kinase 1/CHK1, promoting its stability. Sustains the DNA damage response (DDR) by deubiquitinating and stabilizing the ATP-dependent DNA helicase BLM. Mechanistically, DNA double-strand breaks (DSB) promotes ATM-mediated phosphorylation of USP37 and enhances the binding between USP37 and BLM. Promotes cell migration by deubiquitinating and stabilizing the epithelial-mesenchymal transition (EMT)-inducing transcription factor SNAI. Plays a role in the regulation of mitotic spindle assembly and mitotic progression by associating with chromatin-associated WAPL and stabilizing it through deubiquitination. This chain is Ubiquitin carboxyl-terminal hydrolase 37 (USP37), found in Canis lupus familiaris (Dog).